Here is a 224-residue protein sequence, read N- to C-terminus: LexA repressor (224 aa).

A DNA-binding region (H-T-H motif) is located at residues 31-51; sequence RAEIAAELGFKSANAAEEHLQ. Active-site for autocatalytic cleavage activity residues include Ser142 and Lys179.

Belongs to the peptidase S24 family. In terms of assembly, homodimer.

It carries out the reaction Hydrolysis of Ala-|-Gly bond in repressor LexA.. Represses a number of genes involved in the response to DNA damage (SOS response), including recA and lexA. In the presence of single-stranded DNA, RecA interacts with LexA causing an autocatalytic cleavage which disrupts the DNA-binding part of LexA, leading to derepression of the SOS regulon and eventually DNA repair. In Acidovorax ebreus (strain TPSY) (Diaphorobacter sp. (strain TPSY)), this protein is LexA repressor.